A 112-amino-acid chain; its full sequence is cAMP-regulated phosphoprotein 19 (112 aa).

M1 is modified (N-acetylmethionine). Residues 1 to 11 show a composition bias toward low complexity; it reads MSAEVPEAASA. The disordered stretch occupies residues 1-49; it reads MSAEVPEAASAEEQKEMEDKVTSPEKAEEAKLKARYPHLGQKPGGSDFL. N-acetylserine is present on S2. Phosphoserine is present on residues S2 and S23. Over residues 12–32 the composition is skewed to basic and acidic residues; it reads EEQKEMEDKVTSPEKAEEAKL. Phosphoserine; by GWL is present on residues S62 and S104. A disordered region spans residues 74 to 112; the sequence is NKQLPAAAPDKTEVTGDHIPTPQDLPQRKPSLVASKLAG. S104 is modified (phosphoserine; by PKA). Residue K109 is modified to N6-acetyllysine.

It belongs to the endosulfine family. Interacts (when phosphorylated at Ser-62) with PPP2R2D. Interacts with SNCA. Interacts with PPP2R2A; the interaction is direct and this interaction inhibits PP2A activity. Phosphorylation at Ser-62 by MASTL/GWL during mitosis is essential for interaction with PPP2R2D (PR55-delta) and subsequent inactivation of PP2A. Phosphorylated by PKA.

It localises to the cytoplasm. Protein phosphatase inhibitor that specifically inhibits protein phosphatase 2A (PP2A) during mitosis. Inhibition of PP2A is enhanced when ARPP19 is phosphorylated. When phosphorylated at Ser-62 during mitosis, specifically interacts with PPP2R2D (PR55-delta) and inhibits its activity, leading to inactivation of PP2A, an essential condition to keep cyclin-B1-CDK1 activity high during M phase. May indirectly enhance GAP-43 expression by binding to the NGF-regulatory region of its mRNA. The chain is cAMP-regulated phosphoprotein 19 (Arpp19) from Mus musculus (Mouse).